The chain runs to 269 residues: Gap junction gamma-3 protein (269 aa).

At 1–33 (MLLLELPIKCRMCGRFLRQLLAQESQHSTPVGR) the chain is on the extracellular side. The chain crosses the membrane as a helical span at residues 34 to 54 (FLLPMLMGFRLLILVSSGPGV). Topologically, residues 55–86 (FGNDENEFICHLGQPGCKTICYDVFRPLSPLR) are cytoplasmic. A helical transmembrane segment spans residues 87–107 (FWAFQVILMAVPSAIYVAFTL). Topologically, residues 108-145 (YHVIGYWEVPGKENKEQETQISKGDHSKDVSGAKSLKL) are extracellular. A helical membrane pass occupies residues 146–166 (LWAYVAHLGVRLALEGAALGV). Residues 167 to 205 (QYNLYGFKMSSTFICREDPCIGSTTCFQSHPSEKTIFLN) are Cytoplasmic-facing. Residues 206–226 (IMFGISGACFLFIFLELALLG) traverse the membrane as a helical segment. The Extracellular segment spans residues 227–269 (LGRFWRIYKHKLSFLKKLPTSESSVRSKDTTDELSVVEAKEPF). Ser261 bears the Phosphoserine mark.

It belongs to the connexin family. Gamma-type subfamily. As to quaternary structure, a connexon is composed of a hexamer of connexins. As to expression, CNS specific. Expression is restricted to brain, spinal cord, and sciatic nerve.

The protein localises to the cell membrane. The protein resides in the cell junction. Its subcellular location is the gap junction. One gap junction consists of a cluster of closely packed pairs of transmembrane channels, the connexons, through which materials of low MW diffuse from one cell to a neighboring cell. This chain is Gap junction gamma-3 protein (Gjc3), found in Mus musculus (Mouse).